The chain runs to 203 residues: Cutinase pbc1 (203 aa).

The signal sequence occupies residues 1–18 (MKVTALGNTLTGFGQALA). A disulfide bridge connects residues cysteine 32 and cysteine 107. Residue serine 118 is the Nucleophile of the active site. Cysteine 166 and cysteine 173 are disulfide-bonded. Residue histidine 170 is part of the active site. Residue histidine 183 is the Proton donor/acceptor of the active site.

The protein belongs to the cutinase family. The 2 disulfide bonds play a critical role in holding the catalytic residues in juxta-position; reduction of the disulfide bridges results in the complete inactivation of the enzyme.

The protein resides in the secreted. It catalyses the reaction cutin + H2O = cutin monomers.. In terms of biological role, catalyzes the hydrolysis of complex carboxylic polyesters found in the cell wall of plants. Degrades cutin, a macromolecule that forms the structure of the plant cuticle. Allows pathogenic fungi to penetrate through the cuticular barrier into the host plant during the initial stage of fungal infection. This chain is Cutinase pbc1, found in Pyrenopeziza brassicae.